A 942-amino-acid chain; its full sequence is Protein O-mannosyl-transferase TMTC1 (942 aa).

The Cytoplasmic portion of the chain corresponds to 1–20 (MLVTRGDRGGGERAPSRRPR). The helical transmembrane segment at 21–41 (CGLVPAGAAALLAGASCLCYG) threads the bilayer. Over 42–109 (RSLRGEFVHD…RLNIFLTGMN (68 aa)) the chain is Extracellular. Residues 110-130 (PFYFHAVNVILHCLVTLVLMY) form a helical membrane-spanning segment. Over 131–140 (TCDKTVFKNR) the chain is Cytoplasmic. Residues 141-157 (GLAFVTALLFAVHPVHT) form a helical membrane-spanning segment. The Extracellular portion of the chain corresponds to 158–159 (EA). A helical transmembrane segment spans residues 160–180 (VAGIVGRADVLACLLFLLAFL). At 181 to 196 (SYQRSLDQGCAGQCFP) the chain is on the cytoplasmic side. The chain crosses the membrane as a helical span at residues 197–217 (TTASPFFLLLSLFLGTCAMLV). Over 218–331 (KETGITVFGV…LLTLRPFLKR (114 aa)) the chain is Extracellular. The segment at 245-285 (NGAVCQHSSGQPGSPQPSSQQAHPHRESRKQRFPHKDSWGG) is disordered. A compositionally biased stretch (low complexity) spans 250 to 266 (QHSSGQPGSPQPSSQQA). The helical transmembrane segment at 332–352 (AILVISYVTVILYFRLWIMGG) threads the bilayer. Residues 353 to 373 (TMPLFSEQDNPASFSPYILTR) are Cytoplasmic-facing. The helical transmembrane segment at 374–394 (FLTYSYLLAFNVWLLLAPITL) threads the bilayer. Residues 395-414 (CYDWQVGSIPLVETIWDVRN) lie on the Extracellular side of the membrane. A helical membrane pass occupies residues 415-435 (LATILLAVVMALLSLHCVAAF). The Cytoplasmic portion of the chain corresponds to 436-441 (KRLEHK). A helical membrane pass occupies residues 442–462 (EVLAGLLFLVFPFIPASNLFF). A topological domain (extracellular) is located at residue R463. Residues 464 to 484 (VGFVVAERVLYMPSMGYCILF) form a helical membrane-spanning segment. Residues 485 to 498 (VHGLSKLCAGLSRC) lie on the Cytoplasmic side of the membrane. The chain crosses the membrane as a helical span at residues 499–519 (GATSLMASTVLLLLLFSWKTV). At 520–942 (KQNEIWLSRE…LQEVRERDQT (423 aa)) the chain is on the extracellular side. TPR repeat units follow at residues 543–576 (AKVH…YPRH), 577–607 (ASAL…HPQH), 608–641 (NRAL…GPDF), 642–675 (ADAY…CPDS), 676–709 (SDLH…SPSH), 710–742 (HVAV…VART), 743–776 (AEVL…QPSQ), 777–810 (RELR…EPRC), 811–844 (LECY…KPKD), 849–882 (SELF…DPDQ), and 883–916 (AQAW…VPDS).

Belongs to the TMTC family. As to quaternary structure, may interact with FAM168B.

The protein localises to the membrane. It is found in the endoplasmic reticulum. The catalysed reaction is a di-trans,poly-cis-dolichyl beta-D-mannosyl phosphate + L-seryl-[protein] = 3-O-(alpha-D-mannosyl)-L-seryl-[protein] + a di-trans,poly-cis-dolichyl phosphate + H(+). The enzyme catalyses a di-trans,poly-cis-dolichyl beta-D-mannosyl phosphate + L-threonyl-[protein] = 3-O-(alpha-D-mannosyl)-L-threonyl-[protein] + a di-trans,poly-cis-dolichyl phosphate + H(+). It participates in protein modification; protein glycosylation. Functionally, transfers mannosyl residues to the hydroxyl group of serine or threonine residues. The 4 members of the TMTC family are O-mannosyl-transferases dedicated primarily to the cadherin superfamily, each member seems to have a distinct role in decorating the cadherin domains with O-linked mannose glycans at specific regions. Also acts as O-mannosyl-transferase on other proteins such as PDIA3. This Mus musculus (Mouse) protein is Protein O-mannosyl-transferase TMTC1.